Consider the following 37-residue polypeptide: Hemextin A (37 aa).

As to quaternary structure, heterotetramer composed of two A and two B chains; non-covalently linked. Does not exist as a complex in the crude venom. In terms of processing, may contain several disulfide bonds. As to expression, expressed by the venom gland.

It localises to the secreted. Its function is as follows. Hemextin A (monomer): exhibits mild anticoagulant activity. It specifically inhibits the activation of FX (F10) by the TF-FVIIa complex (extrinsic tenase complex (ETC)) by non-competitively inhibiting the enzymatic activity of FVIIa. In terms of biological role, hemextin AB complex: specifically inhibits the activation of FX (F10) by the TF-FVIIa complex (extrinsic tenase complex (ETC)) (IC(50)= 100 nM, Ki=25 nM) by non-competitively inhibiting the enzymatic activity of FVIIa. This Hemachatus haemachatus (Rinkhals) protein is Hemextin A.